The primary structure comprises 191 residues: Large ribosomal subunit protein bL9 (191 aa).

Residues 149 to 191 (EEAERQSKGESLTSADAIYGVDEDALRPEDFFDPEADGNEDDE) are disordered. Residues 179 to 191 (FFDPEADGNEDDE) are compositionally biased toward acidic residues.

This sequence belongs to the bacterial ribosomal protein bL9 family.

Its function is as follows. Binds to the 23S rRNA. This Agrobacterium fabrum (strain C58 / ATCC 33970) (Agrobacterium tumefaciens (strain C58)) protein is Large ribosomal subunit protein bL9 (rplI).